The following is a 148-amino-acid chain: Calcium-permeable cation-selective channel WeiTsing (148 aa).

Over Met-1–Ser-25 the chain is Cytoplasmic. The helical transmembrane segment at Ala-26 to Val-46 threads the bilayer. Topologically, residues Ser-47–Ser-51 are lumenal. The helical transmembrane segment at Val-52–Val-72 threads the bilayer. Residues Leu-73–Arg-90 are Cytoplasmic-facing. The helical transmembrane segment at Leu-91–Val-110 threads the bilayer. Topologically, residues Val-111 to Ser-116 are lumenal. A helical membrane pass occupies residues Ile-117–Leu-133. At Glu-134 to Val-148 the chain is on the cytoplasmic side.

In terms of assembly, forms pentamers with a central pore to produce an ion channel.

It is found in the endoplasmic reticulum membrane. It catalyses the reaction Ca(2+)(in) = Ca(2+)(out). It carries out the reaction Na(+)(in) = Na(+)(out). In terms of biological role, calcium-permeable cation-selective channel conferring a broad-spectrum clubroot resistance by supporting cytosolic Ca(2+) increase in root pericycle cells. Triggers immunity toward fungal pathogens such as Plasmodiophora brassicae (Pb) and induces defenses. Also permeable to sodium ion Na(+) and possibly other cations. This is Calcium-permeable cation-selective channel WeiTsing from Arabidopsis thaliana (Mouse-ear cress).